Here is a 473-residue protein sequence, read N- to C-terminus: Mitochondrial distribution and morphology protein 10 (473 aa).

Belongs to the MDM10 family. Component of the ER-mitochondria encounter structure (ERMES) or MDM complex, composed of MMM1, MDM10, MDM12 and MDM34. Associates with the mitochondrial outer membrane sorting assembly machinery SAM(core) complex.

It is found in the mitochondrion outer membrane. Component of the ERMES/MDM complex, which serves as a molecular tether to connect the endoplasmic reticulum and mitochondria. Components of this complex are involved in the control of mitochondrial shape and protein biogenesis and may function in phospholipid exchange. MDM10 is involved in the late assembly steps of the general translocase of the mitochondrial outer membrane (TOM complex). Functions in the TOM40-specific route of the assembly of outer membrane beta-barrel proteins, including the association of TOM40 with the receptor TOM22 and small TOM proteins. Can associate with the SAM(core) complex as well as the MDM12-MMM1 complex, both involved in late steps of the major beta-barrel assembly pathway, that is responsible for biogenesis of all outer membrane beta-barrel proteins. May act as a switch that shuttles between both complexes and channels precursor proteins into the TOM40-specific pathway. Plays a role in mitochondrial morphology and in the inheritance of mitochondria. The protein is Mitochondrial distribution and morphology protein 10 of Candida albicans (strain WO-1) (Yeast).